Here is a 141-residue protein sequence, read N- to C-terminus: U-scoloptoxin(17)-Er3a (141 aa).

The signal sequence occupies residues 1 to 21 (MKSTFALVFGILMVIAHLSFA).

Belongs to the scoloptoxin-17 family. Contains 3 disulfide bonds. Expressed by the venom gland.

Its subcellular location is the secreted. The protein is U-scoloptoxin(17)-Er3a of Ethmostigmus rubripes (Giant centipede).